The chain runs to 360 residues: MDTPLRRSRRLGGLRPECPESLTSVSRTRRALVELESNPEETREPGSPPSVQRAGLGSPERPPKTSPGSPRLQQGSGLESPQGQPEPGAGSPQRQQDLHLESPQRQPEYSPESPRCQPKPSEEVPKCSQDQGVLASELAQSKEELTPGAPQHQLPPVPGSPEPYPGQQAPGPEPSQPLLELTPRAPGSPRGQHEPSKPPPAGETVTGGFGAKKRKGSSSLAPASKKLNKEELPVIPKGKPKSGRVWKDRSKKRFSQMLQDKPLRTSWQRKMKERQERKLAKDFARHLEEEKERRRQEKKQRRAENLKRRLENERKAEVVQVIRNPAKLKRAKKKQLRSIEKRDTLALLQKQPPQRPAAKI.

The segment covering 1-12 has biased composition (basic residues); the sequence is MDTPLRRSRRLG. 2 disordered regions span residues 1-314 and 328-360; these read MDTP…ENER and LKRA…AAKI. Phosphoserine occurs at positions 21, 24, 47, 50, and 58. T65 bears the Phosphothreonine mark. A phosphoserine mark is found at S66, S69, S80, S91, S102, S110, S113, and S128. Over residues 66 to 83 the composition is skewed to polar residues; that stretch reads SPGSPRLQQGSGLESPQG. Residues 153 to 164 show a composition bias toward pro residues; sequence QLPPVPGSPEPY. 3 positions are modified to phosphoserine: S188, S217, and S218. Basic residues predominate over residues 238–254; it reads GKPKSGRVWKDRSKKRF. The stretch at 272 to 323 forms a coiled coil; that stretch reads KERQERKLAKDFARHLEEEKERRRQEKKQRRAENLKRRLENERKAEVVQVIR. Basic and acidic residues-rich tracts occupy residues 273–295 and 302–314; these read ERQE…ERRR and RAEN…ENER. R342 carries the post-translational modification Citrulline.

Citrullinated by PADI4.

Its subcellular location is the nucleus. It localises to the chromosome. It is found in the nucleolus. Its function is as follows. Required for proper chromosome segregation during mitosis and error-free mitotic progression. This is Coiled-coil domain-containing protein 86 from Pongo abelii (Sumatran orangutan).